The sequence spans 511 residues: Lysine--tRNA ligase (511 aa).

Residues glutamate 403 and glutamate 410 each contribute to the Mg(2+) site.

Belongs to the class-II aminoacyl-tRNA synthetase family. Homodimer. Mg(2+) serves as cofactor.

It is found in the cytoplasm. The enzyme catalyses tRNA(Lys) + L-lysine + ATP = L-lysyl-tRNA(Lys) + AMP + diphosphate. This is Lysine--tRNA ligase from Onion yellows phytoplasma (strain OY-M).